We begin with the raw amino-acid sequence, 622 residues long: Ferredoxin-fold anticodon-binding domain-containing protein 1 homolog (622 aa).

Positions Leu-529–Arg-622 constitute an FDX-ACB domain.

In Mus musculus (Mouse), this protein is Ferredoxin-fold anticodon-binding domain-containing protein 1 homolog (Fdxacb1).